We begin with the raw amino-acid sequence, 878 residues long: Aminopeptidase M1-A (878 aa).

The segment at 105-212 (VGEGTLVIAF…MSTYLVAVIV (108 aa)) is required for membrane association. Residues glutamate 145 and 278–282 (GAMEN) each bind substrate. Histidine 314 lines the Zn(2+) pocket. The Proton acceptor role is filled by glutamate 315. Zn(2+) is bound by residues histidine 318 and glutamate 337. The short motif at 727–728 (LL) is the Dileucine internalization motif element.

Belongs to the peptidase M1 family. In terms of assembly, homodimer. Requires Zn(2+) as cofactor.

It localises to the membrane. The protein resides in the microsome membrane. It is found in the cytoplasm. The enzyme catalyses Release of an N-terminal amino acid, Xaa-|-Yaa- from a peptide, amide or arylamide. Xaa is preferably Ala, but may be most amino acids including Pro (slow action). When a terminal hydrophobic residue is followed by a prolyl residue, the two may be released as an intact Xaa-Pro dipeptide.. The polypeptide is Aminopeptidase M1-A (Oryza sativa subsp. japonica (Rice)).